Consider the following 89-residue polypeptide: UPF0297 protein SEQ_2150 (89 aa).

The protein belongs to the UPF0297 family.

This Streptococcus equi subsp. equi (strain 4047) protein is UPF0297 protein SEQ_2150.